We begin with the raw amino-acid sequence, 357 residues long: Glutamate 5-kinase (357 aa).

Lysine 7 is an ATP binding site. Substrate is bound by residues serine 43, aspartate 130, and asparagine 142. 162–163 (TD) lines the ATP pocket. The PUA domain occupies 270–347 (QGELTLDAGA…PAAGPSPVVV (78 aa)).

This sequence belongs to the glutamate 5-kinase family.

It localises to the cytoplasm. It carries out the reaction L-glutamate + ATP = L-glutamyl 5-phosphate + ADP. It functions in the pathway amino-acid biosynthesis; L-proline biosynthesis; L-glutamate 5-semialdehyde from L-glutamate: step 1/2. Functionally, catalyzes the transfer of a phosphate group to glutamate to form L-glutamate 5-phosphate. The chain is Glutamate 5-kinase from Parasynechococcus marenigrum (strain WH8102).